Consider the following 337-residue polypeptide: Alcohol dehydrogenase 1 (337 aa).

Residues cysteine 37, histidine 58, cysteine 89, cysteine 92, cysteine 95, cysteine 103, and cysteine 145 each contribute to the Zn(2+) site.

Belongs to the zinc-containing alcohol dehydrogenase family. Multimeric (with different ratios of monomers). The cofactor is Zn(2+).

It carries out the reaction a primary alcohol + NAD(+) = an aldehyde + NADH + H(+). It catalyses the reaction a secondary alcohol + NAD(+) = a ketone + NADH + H(+). The protein operates within alcohol metabolism; ethanol biosynthesis via fermentation pathway. Its activity is regulated as follows. Inhibited by ethanol. This Zymomonas mobilis subsp. mobilis (strain ATCC 31821 / ZM4 / CP4) protein is Alcohol dehydrogenase 1 (adhA).